Consider the following 278-residue polypeptide: Urease accessory protein UreD (278 aa).

It belongs to the UreD family. As to quaternary structure, ureD, UreF and UreG form a complex that acts as a GTP-hydrolysis-dependent molecular chaperone, activating the urease apoprotein by helping to assemble the nickel containing metallocenter of UreC. The UreE protein probably delivers the nickel.

It localises to the cytoplasm. Required for maturation of urease via the functional incorporation of the urease nickel metallocenter. This Escherichia coli protein is Urease accessory protein UreD.